Consider the following 263-residue polypeptide: Glucosamine-6-phosphate deaminase (263 aa).

Asp72 functions as the Proton acceptor; for enolization step in the catalytic mechanism. The For ring-opening step role is filled by Asp141. His143 (proton acceptor; for ring-opening step) is an active-site residue. Residue Glu148 is the For ring-opening step of the active site.

Belongs to the glucosamine/galactosamine-6-phosphate isomerase family. NagB subfamily.

It catalyses the reaction alpha-D-glucosamine 6-phosphate + H2O = beta-D-fructose 6-phosphate + NH4(+). It participates in amino-sugar metabolism; N-acetylneuraminate degradation; D-fructose 6-phosphate from N-acetylneuraminate: step 5/5. Allosterically activated by N-acetylglucosamine 6-phosphate (GlcNAc6P). Functionally, catalyzes the reversible isomerization-deamination of glucosamine 6-phosphate (GlcN6P) to form fructose 6-phosphate (Fru6P) and ammonium ion. The polypeptide is Glucosamine-6-phosphate deaminase (Phocaeicola vulgatus (strain ATCC 8482 / DSM 1447 / JCM 5826 / CCUG 4940 / NBRC 14291 / NCTC 11154) (Bacteroides vulgatus)).